The following is a 482-amino-acid chain: tRNA-2-methylthio-N(6)-dimethylallyladenosine synthase (482 aa).

Positions 3 to 120 (KKLHIKTWGC…LPEMIKQVQG (118 aa)) constitute an MTTase N-terminal domain. Residues C12, C49, C83, C158, C162, and C165 each coordinate [4Fe-4S] cluster. One can recognise a Radical SAM core domain in the interval 144 to 376 (KADGPSAFVS…QNRITQMAQQ (233 aa)). The region spanning 379-442 (RQMFDTEQRI…PNSLRGDLIR (64 aa)) is the TRAM domain.

This sequence belongs to the methylthiotransferase family. MiaB subfamily. Monomer. Requires [4Fe-4S] cluster as cofactor.

Its subcellular location is the cytoplasm. It carries out the reaction N(6)-dimethylallyladenosine(37) in tRNA + (sulfur carrier)-SH + AH2 + 2 S-adenosyl-L-methionine = 2-methylsulfanyl-N(6)-dimethylallyladenosine(37) in tRNA + (sulfur carrier)-H + 5'-deoxyadenosine + L-methionine + A + S-adenosyl-L-homocysteine + 2 H(+). Functionally, catalyzes the methylthiolation of N6-(dimethylallyl)adenosine (i(6)A), leading to the formation of 2-methylthio-N6-(dimethylallyl)adenosine (ms(2)i(6)A) at position 37 in tRNAs that read codons beginning with uridine. This Pseudoalteromonas translucida (strain TAC 125) protein is tRNA-2-methylthio-N(6)-dimethylallyladenosine synthase.